The sequence spans 982 residues: Pentatricopeptide repeat-containing protein At5g62370 (982 aa).

PPR repeat units follow at residues Asp-94–Pro-129, Asp-130–Pro-164, Ser-165–Leu-199, Trp-200–Pro-234, Pro-236–Val-270, Asp-271–Leu-305, Asp-306–Ser-340, Asn-341–Arg-376, Asn-377–Pro-411, Asp-412–Ile-446, Ala-476–Pro-510, Leu-511–Pro-545, Asp-546–Pro-580, Thr-581–Pro-615, Asp-616–Pro-650, Ser-651–Pro-685, Asn-686–His-720, Asp-721–Gln-755, Arg-759–Ser-789, Asn-793–Pro-827, Asn-828–Glu-858, Asp-860–Pro-894, Asn-895–Pro-929, and Arg-930–Leu-964.

The protein belongs to the PPR family. P subfamily.

This Arabidopsis thaliana (Mouse-ear cress) protein is Pentatricopeptide repeat-containing protein At5g62370.